Here is a 376-residue protein sequence, read N- to C-terminus: Anhydro-N-acetylmuramic acid kinase (376 aa).

ATP is bound at residue 11-18; the sequence is GTSMDGVD.

Belongs to the anhydro-N-acetylmuramic acid kinase family.

It catalyses the reaction 1,6-anhydro-N-acetyl-beta-muramate + ATP + H2O = N-acetyl-D-muramate 6-phosphate + ADP + H(+). Its pathway is amino-sugar metabolism; 1,6-anhydro-N-acetylmuramate degradation. It functions in the pathway cell wall biogenesis; peptidoglycan recycling. Functionally, catalyzes the specific phosphorylation of 1,6-anhydro-N-acetylmuramic acid (anhMurNAc) with the simultaneous cleavage of the 1,6-anhydro ring, generating MurNAc-6-P. Is required for the utilization of anhMurNAc either imported from the medium or derived from its own cell wall murein, and thus plays a role in cell wall recycling. This is Anhydro-N-acetylmuramic acid kinase from Acinetobacter baylyi (strain ATCC 33305 / BD413 / ADP1).